The following is a 208-amino-acid chain: MNVNVINHPLVRHKLTLMREADCSTYKFRTLATELARLMAYEASRDFEIEKYLIDGWCGQIEGDRIKGKTLTVVPILRAGLGMLDGVLDLIPTAKISVVGLQRDEETLKPISYFEKFVDSMDERPALIIDPMLATGGSMVATIDLLKAKGCKNIKALVLVAAPEGVKAVNDAHPDVTIYTAALDSHLNENGYIIPGLGDAGDKIFGTR.

5-phospho-alpha-D-ribose 1-diphosphate is bound by residues arginine 78, arginine 103, and 130–138 (DPMLATGGS). Residues isoleucine 193 and 198-200 (GDA) each bind uracil. Aspartate 199 is a 5-phospho-alpha-D-ribose 1-diphosphate binding site.

The protein belongs to the UPRTase family. Requires Mg(2+) as cofactor.

The catalysed reaction is UMP + diphosphate = 5-phospho-alpha-D-ribose 1-diphosphate + uracil. It participates in pyrimidine metabolism; UMP biosynthesis via salvage pathway; UMP from uracil: step 1/1. Its activity is regulated as follows. Allosterically activated by GTP. Functionally, catalyzes the conversion of uracil and 5-phospho-alpha-D-ribose 1-diphosphate (PRPP) to UMP and diphosphate. This chain is Uracil phosphoribosyltransferase, found in Neisseria meningitidis serogroup B (strain ATCC BAA-335 / MC58).